Here is an 839-residue protein sequence, read N- to C-terminus: Taste receptor type 1 member 2 (839 aa).

Residues 1-19 form the signal peptide; the sequence is MGTRATTICSLFFLLWVLA. At 20 to 566 the chain is on the extracellular side; sequence EPAENSDFYL…VFLEWHEAPT (547 aa). 9 N-linked (GlcNAc...) asparagine glycosylation sites follow: Asn84, Asn248, Asn292, Asn312, Asn368, Asn407, Asn428, Asn487, and Asn527. A helical transmembrane segment spans residues 567–587; the sequence is IAVALLAALGFLSTLAILVIF. The Cytoplasmic portion of the chain corresponds to 588 to 602; it reads WRHFQTPIVRSAGGP. Residues 603–623 form a helical membrane-spanning segment; the sequence is MCFLMLTLLLVAYMVVPVYVG. Over 624–635 the chain is Extracellular; the sequence is PPKVSTCLCRQA. The chain crosses the membrane as a helical span at residues 636–656; the sequence is LFPLCFTICISCIAVRSFQIV. The Cytoplasmic segment spans residues 657–681; the sequence is CAFKMASRFPRAYSYWVRYQGPYVS. The helical transmembrane segment at 682-702 threads the bilayer; it reads MAFITVLKMVIVVIGMLATGL. The Extracellular portion of the chain corresponds to 703–727; the sequence is SPTTRTDPDDPKITIVSCNPNYRNS. Residues 728–748 form a helical membrane-spanning segment; it reads LLFNTSLDLLLSVVGFSFAYM. At 749-760 the chain is on the cytoplasmic side; the sequence is GKELPTNYNEAK. The helical transmembrane segment at 761–781 threads the bilayer; it reads FITLSMTFYFTSSVSLCTFMS. The Extracellular segment spans residues 782–784; it reads AYS. Residues 785–805 form a helical membrane-spanning segment; it reads GVLVTIVDLLVTVLNLLAISL. The Cytoplasmic portion of the chain corresponds to 806 to 839; it reads GYFGPKCYMILFYPERNTPAYFNSMIQGYTMRRD.

The protein belongs to the G-protein coupled receptor 3 family. TAS1R subfamily. As to quaternary structure, forms heterodimers with TAS1R3.

It localises to the cell membrane. Putative taste receptor. TAS1R2/TAS1R3 recognizes diverse natural and synthetic sweeteners. The chain is Taste receptor type 1 member 2 (TAS1R2) from Gorilla gorilla gorilla (Western lowland gorilla).